The chain runs to 1284 residues: Zinc finger protein 423 (1284 aa).

Disordered regions lie at residues 1–64 (MHKK…MEDE) and 87–117 (AHRC…SPTQ). Over residues 34-46 (CDQKTSRALEDRN) the composition is skewed to basic and acidic residues. Phosphoserine is present on residues S47 and S50. The span at 54–64 (RNEDDEDMEDE) shows a compositional bias: acidic residues. The C2H2-type 1; degenerate zinc finger occupies 67 to 93 (YTCDHCQQDFESLADLTDHRAHRCPGD). The segment covering 102 to 117 (WVASSPSSKDVASPTQ) has biased composition (polar residues). 7 consecutive C2H2-type zinc fingers follow at residues 138–160 (YPCQ…EQIH), 166–188 (FKCT…IKLH), 194–216 (YHCH…LKTH), 222–244 (FKCT…MQAH), 263–286 (FMCD…LTRH), 295–318 (LQCI…HQAH), and 323–345 (HKCP…LDSH). A disordered region spans residues 346 to 398 (RQPDSSNHSVSPDPVLGSVASMSSATPDSSASVERGSTPDSTLKPLRGQKKMR). The span at 363–377 (SVASMSSATPDSSAS) shows a compositional bias: low complexity. The C2H2-type 9; degenerate zinc finger occupies 409–433 (YSCPYCSKRDFNSLAVLEIHLKTIH). C2H2-type zinc fingers lie at residues 441-464 (HTCQ…RKLH), 480-503 (FHCN…RVSH), and 517-540 (FFCN…QQAH). The C2H2-type 13; atypical zinc finger occupies 563–588 (YSCPYCTNSPIFGSILKLTKHIKENH). The interval 590-624 (NIPLAHSKKSKAEQSPVSSDVEVSSPKRQRLSASA) is disordered. A Phosphoserine modification is found at S604. Low complexity predominate over residues 604-615 (SPVSSDVEVSSP). C2H2-type zinc fingers lie at residues 632–654 (YPCN…LKLH), 662–684 (QACP…LTVH), 692–715 (YVCE…LDMH), 720–743 (YHCT…AVKH), 750–773 (YRCT…KHSH), 781–803 (HKCI…ITTH), and 807–830 (YNCK…REKH). The C2H2-type 21; degenerate zinc finger occupies 886-908 (YGCDICGAAYTMEVLLQNHRLRD). 3 C2H2-type zinc fingers span residues 930–952 (HKCN…LQTH), 959–981 (YMCP…KVTH), and 1020–1042 (FRCV…GTFH). S1054 carries the post-translational modification Phosphoserine. The C2H2-type 25; degenerate zinc finger occupies 1064–1082 (YKCALCLKEFRSKQDLVKL). 5 consecutive C2H2-type zinc fingers follow at residues 1120–1143 (LRCP…QVDH), 1168–1190 (YQCI…VANH), 1198–1220 (HECK…LIEH), 1229–1252 (FKCP…FAVH), and 1259–1282 (YDCS…MSQH). Basic and acidic residues predominate over residues 1136-1147 (ESHMQVDHRDLT). Positions 1136–1163 (ESHMQVDHRDLTPETSGPRKGTQTSPVP) are disordered.

Belongs to the krueppel C2H2-type zinc-finger protein family. As to quaternary structure, homodimer. Interacts with EBF1. Interacts with SMAD1 and SMAD4. Interacts with PARP1. Interacts with CEP290. In terms of tissue distribution, expressed in brain, lung, skeletal muscle, heart, pancreas and kidney but not liver or placenta. Also expressed in aorta, ovary, pituitary, small intestine, fetal brain, fetal kidney and, within the adult brain, in the substantia nigra, medulla, amygdala, thalamus and cerebellum.

It localises to the nucleus. Functionally, transcription factor that can both act as an activator or a repressor depending on the context. Plays a central role in BMP signaling and olfactory neurogenesis. Associates with SMADs in response to BMP2 leading to activate transcription of BMP target genes. Acts as a transcriptional repressor via its interaction with EBF1, a transcription factor involved in terminal olfactory receptor neurons differentiation; this interaction preventing EBF1 to bind DNA and activate olfactory-specific genes. Involved in olfactory neurogenesis by participating in a developmental switch that regulates the transition from differentiation to maturation in olfactory receptor neurons. Controls proliferation and differentiation of neural precursors in cerebellar vermis formation. This chain is Zinc finger protein 423 (ZNF423), found in Homo sapiens (Human).